A 108-amino-acid chain; its full sequence is UPF0060 membrane protein Msil_1658 (108 aa).

Helical transmembrane passes span 5 to 25 (LVYV…WAWL), 31 to 51 (SLWL…LTLI), 62 to 82 (AYGG…EGVW), and 88 to 108 (LGGA…PRPA).

This sequence belongs to the UPF0060 family.

It localises to the cell inner membrane. This is UPF0060 membrane protein Msil_1658 from Methylocella silvestris (strain DSM 15510 / CIP 108128 / LMG 27833 / NCIMB 13906 / BL2).